We begin with the raw amino-acid sequence, 757 residues long: E3 ubiquitin-protein ligase SMURF1 (757 aa).

Residues 1-120 (MSNPGTRRNG…TGYQRLDLCK (120 aa)) form the C2 domain. The segment at 193–237 (GNCRFVESPSQDQRLQAQRLRNPDVRGSLQTPQNRPHGHQSPELP) is disordered. The residue at position 200 (serine 200) is a Phosphoserine. WW domains are found at residues 234–267 (PELP…DPRI) and 306–339 (GPLP…DPRL). Glycyl lysine isopeptide (Lys-Gly) (interchain with G-Cter in ubiquitin) cross-links involve residues lysine 381 and lysine 383. The HECT domain maps to 420–757 (RPKDLKKRLM…VEETCGFAVE (338 aa)). Cysteine 725 (glycyl thioester intermediate) is an active-site residue.

As to quaternary structure, interacts with TRAF4. Interacts (via HECT domain) with FBXL15 (via LRR repeats). Interacts with SMAD7 and TGFBR1; SMAD7 recruits SMURF1 to TGFBR1 and regulates TGF-beta receptor degradation. Interacts with MAVS; the interaction is mediated by NDFIP1. Auto-ubiquitinated in presence of NDFIP1. Ubiquitinated by the SCF(FBXL15) complex at Lys-381 and Lys-383, leading to its degradation by the proteasome. Lys-383 is the primary ubiquitination site. In terms of tissue distribution, expressed in melanocytes.

The protein resides in the cytoplasm. The protein localises to the cell membrane. The enzyme catalyses S-ubiquitinyl-[E2 ubiquitin-conjugating enzyme]-L-cysteine + [acceptor protein]-L-lysine = [E2 ubiquitin-conjugating enzyme]-L-cysteine + N(6)-ubiquitinyl-[acceptor protein]-L-lysine.. It participates in protein modification; protein ubiquitination. Its function is as follows. E3 ubiquitin-protein ligase that acts as a negative regulator of BMP signaling pathway. Mediates ubiquitination and degradation of SMAD1 and SMAD5, 2 receptor-regulated SMADs specific for the BMP pathway. Promotes ubiquitination and subsequent proteasomal degradation of TRAF family members and RHOA. Promotes ubiquitination and subsequent proteasomal degradation of MAVS. Acts as an antagonist of TGF-beta signaling by ubiquitinating TGFBR1 and targeting it for degradation. Plays a role in dendrite formation by melanocytes. This chain is E3 ubiquitin-protein ligase SMURF1 (SMURF1), found in Homo sapiens (Human).